Reading from the N-terminus, the 89-residue chain is Small ribosomal subunit protein uS17 (89 aa).

Belongs to the universal ribosomal protein uS17 family. In terms of assembly, part of the 30S ribosomal subunit.

One of the primary rRNA binding proteins, it binds specifically to the 5'-end of 16S ribosomal RNA. The protein is Small ribosomal subunit protein uS17 of Coxiella burnetii (strain RSA 331 / Henzerling II).